Consider the following 198-residue polypeptide: MSGPGATAVGIKVKDGVVLAAERRMSYGGFIMSKAARKVFKVGDRMGMACAGLYADMQAIARALENEIRYYEISNKRKMKVRSAARLLGLILYSNKLFPLMTETVFGGYDDEPRIFVLDPVGSVIEEKYSAVGTGAPLAMALLDKEYREDMSLEEAQNLAIESVKVASGRDSLSGDGIDVLVIPFGGKPSIRTVSLEA.

The propeptide at 1–6 (MSGPGA) is removed in mature form; by autocatalysis. The active-site Nucleophile is the Thr7.

The protein belongs to the peptidase T1B family. The 20S proteasome core is composed of 14 alpha and 14 beta subunits that assemble into four stacked heptameric rings, resulting in a barrel-shaped structure. The two inner rings, each composed of seven catalytic beta subunits, are sandwiched by two outer rings, each composed of seven alpha subunits. The catalytic chamber with the active sites is on the inside of the barrel. Has a gated structure, the ends of the cylinder being occluded by the N-termini of the alpha-subunits. Is capped at one or both ends by the proteasome regulatory ATPase, PAN.

Its subcellular location is the cytoplasm. It carries out the reaction Cleavage of peptide bonds with very broad specificity.. Its activity is regulated as follows. The formation of the proteasomal ATPase PAN-20S proteasome complex, via the docking of the C-termini of PAN into the intersubunit pockets in the alpha-rings, triggers opening of the gate for substrate entry. Interconversion between the open-gate and close-gate conformations leads to a dynamic regulation of the 20S proteasome proteolysis activity. Its function is as follows. Component of the proteasome core, a large protease complex with broad specificity involved in protein degradation. The polypeptide is Proteasome subunit beta 1 (Ignicoccus hospitalis (strain KIN4/I / DSM 18386 / JCM 14125)).